The chain runs to 197 residues: Imidazoleglycerol-phosphate dehydratase (197 aa).

The protein belongs to the imidazoleglycerol-phosphate dehydratase family.

The protein localises to the cytoplasm. It carries out the reaction D-erythro-1-(imidazol-4-yl)glycerol 3-phosphate = 3-(imidazol-4-yl)-2-oxopropyl phosphate + H2O. It functions in the pathway amino-acid biosynthesis; L-histidine biosynthesis; L-histidine from 5-phospho-alpha-D-ribose 1-diphosphate: step 6/9. This chain is Imidazoleglycerol-phosphate dehydratase, found in Pseudomonas entomophila (strain L48).